We begin with the raw amino-acid sequence, 401 residues long: Phosphoglycerate kinase (401 aa).

Substrate-binding positions include 20-22 (DFN), R35, 58-61 (HLGR), R117, and R154. Residues K204, G298, E329, and 358 to 361 (GGDS) each bind ATP.

The protein belongs to the phosphoglycerate kinase family. In terms of assembly, monomer.

It localises to the cytoplasm. It carries out the reaction (2R)-3-phosphoglycerate + ATP = (2R)-3-phospho-glyceroyl phosphate + ADP. It functions in the pathway carbohydrate degradation; glycolysis; pyruvate from D-glyceraldehyde 3-phosphate: step 2/5. This chain is Phosphoglycerate kinase, found in Bifidobacterium longum subsp. infantis (strain ATCC 15697 / DSM 20088 / JCM 1222 / NCTC 11817 / S12).